We begin with the raw amino-acid sequence, 140 residues long: MENKLKLEVITPYGEVINEEVDEVYTTGAEGDFGVFPGHCAFMTAIRIGSLSYKKDGQMHYLFVNRGYCEVLNDRVLVLVGSAERVEEIDVERAKAALARAEERLRKAQAGETDIDLARAQAALERATIRIQLATKLIPR.

Belongs to the ATPase epsilon chain family. F-type ATPases have 2 components, CF(1) - the catalytic core - and CF(0) - the membrane proton channel. CF(1) has five subunits: alpha(3), beta(3), gamma(1), delta(1), epsilon(1). CF(0) has three main subunits: a, b and c.

It localises to the cell inner membrane. Functionally, produces ATP from ADP in the presence of a proton gradient across the membrane. This Thermodesulfovibrio yellowstonii (strain ATCC 51303 / DSM 11347 / YP87) protein is ATP synthase epsilon chain.